A 93-amino-acid chain; its full sequence is Large ribosomal subunit protein mL41 (93 aa).

A mitochondrion-targeting transit peptide spans 1 to 13 (MHQSLLCFGARRL).

This sequence belongs to the mitochondrion-specific ribosomal protein mL41 family. In terms of assembly, component of the mitochondrial large ribosomal subunit (mt-LSU). Mature yeast 74S mitochondrial ribosomes consist of a small (37S) and a large (54S) subunit. The 37S small subunit contains a 15S ribosomal RNA (15S mt-rRNA) and at least 32 different proteins. The 54S large subunit contains a 21S rRNA (21S mt-rRNA) and at least 45 different proteins.

The protein localises to the mitochondrion. In terms of biological role, component of the mitochondrial ribosome (mitoribosome), a dedicated translation machinery responsible for the synthesis of mitochondrial genome-encoded proteins, including at least some of the essential transmembrane subunits of the mitochondrial respiratory chain. The mitoribosomes are attached to the mitochondrial inner membrane and translation products are cotranslationally integrated into the membrane. The polypeptide is Large ribosomal subunit protein mL41 (mrpl27) (Schizosaccharomyces pombe (strain 972 / ATCC 24843) (Fission yeast)).